Here is a 223-residue protein sequence, read N- to C-terminus: Type III pantothenate kinase (223 aa).

17-24 lines the ATP pocket; sequence DIGNTRIH. Substrate-binding positions include Tyr-81 and 85 to 88; that span reads GIDR. Asp-87 functions as the Proton acceptor in the catalytic mechanism. Asp-102 is a K(+) binding site. Position 105 (Ser-105) interacts with ATP. Thr-157 provides a ligand contact to substrate.

The protein belongs to the type III pantothenate kinase family. As to quaternary structure, homodimer. The cofactor is NH4(+). K(+) is required as a cofactor.

It localises to the cytoplasm. It carries out the reaction (R)-pantothenate + ATP = (R)-4'-phosphopantothenate + ADP + H(+). It functions in the pathway cofactor biosynthesis; coenzyme A biosynthesis; CoA from (R)-pantothenate: step 1/5. Catalyzes the phosphorylation of pantothenate (Pan), the first step in CoA biosynthesis. The polypeptide is Type III pantothenate kinase (Helicobacter pylori (strain J99 / ATCC 700824) (Campylobacter pylori J99)).